The primary structure comprises 503 residues: MLSQLAMLQGSLLLVVATMSVAQQTRQEADRGCETLVVQHGHCSYTFLLPKSEPCPPGPEVSRDSNTLQRESLANPLHLGKLPTQQVKQLEQALQNNTQWLKKLERAIKTILRSKLEQVQQQMAQNQTAPMLELGTSLLNQTTAQIRKLTDMEAQLLNQTSRMDAQMPETFLSTNKLENQLLLQRQKLQQLQGQNSALEKRLQALETKQQEELASILSKKAKLLNTLSRQSAALTNIERGLRGVRHNSSLLQDQQHSLRQLLVLLRHLVQERANASAPAFIMAGEQVFQDCAEIQRSGASASGVYTIQVSNATKPRKVFCDLQSSGGRWTLIQRRENGTVNFQRNWKDYKQGFGDPAGEHWLGNEVVHQLTRRAAYSLRVELQDWEGHEAYAQYEHFHLGSENQLYRLSVVGYSGSAGRQSSLVLQNTSFSTLDSDNDHCLCKCAQVMSGGWWFDACGLSNLNGVYYHAPDNKYKMDGIRWHYFKGPSYSLRASRMMIRPLDI.

Positions 1–24 (MLSQLAMLQGSLLLVVATMSVAQQ) are cleaved as a signal peptide. Residues 84–238 (TQQVKQLEQA…RQSAALTNIE (155 aa)) are a coiled coil. N-linked (GlcNAc...) asparagine glycans are attached at residues asparagine 96, asparagine 126, asparagine 140, asparagine 158, asparagine 247, asparagine 274, asparagine 311, asparagine 337, and asparagine 427. One can recognise a Fibrinogen C-terminal domain in the interval 282–502 (MAGEQVFQDC…ASRMMIRPLD (221 aa)). Cysteine 291 and cysteine 320 form a disulfide bridge. A disulfide bridge links cysteine 444 with cysteine 457.

As to quaternary structure, homodimer; disulfide-linked. Interacts with TEK/TIE2. In terms of tissue distribution, highly expressed in the lung with much lower levels found in other tissues.

The protein resides in the secreted. Binds to TEK/TIE2, modulating ANGPT1 signaling. Can induce tyrosine phosphorylation of TEK/TIE2. Promotes endothelial cell survival, migration and angiogenesis. This chain is Angiopoietin-4 (ANGPT4), found in Homo sapiens (Human).